Here is a 149-residue protein sequence, read N- to C-terminus: 3-hydroxyacyl-[acyl-carrier-protein] dehydratase FabZ (149 aa).

Residue His53 is part of the active site.

It belongs to the thioester dehydratase family. FabZ subfamily.

The protein localises to the cytoplasm. The catalysed reaction is a (3R)-hydroxyacyl-[ACP] = a (2E)-enoyl-[ACP] + H2O. In terms of biological role, involved in unsaturated fatty acids biosynthesis. Catalyzes the dehydration of short chain beta-hydroxyacyl-ACPs and long chain saturated and unsaturated beta-hydroxyacyl-ACPs. The protein is 3-hydroxyacyl-[acyl-carrier-protein] dehydratase FabZ of Polynucleobacter asymbioticus (strain DSM 18221 / CIP 109841 / QLW-P1DMWA-1) (Polynucleobacter necessarius subsp. asymbioticus).